The primary structure comprises 397 residues: Lysophospholipid transporter LplT (397 aa).

The next 11 membrane-spanning stretches (helical) occupy residues Met-16 to Ala-36, Val-53 to Ala-73, Leu-91 to Ile-111, Leu-139 to Ala-159, Leu-164 to Ile-184, Leu-227 to Leu-247, Ala-253 to Ala-273, Thr-281 to Val-301, Leu-305 to Pro-325, Asn-352 to Pro-372, and Val-373 to Trp-393.

It belongs to the major facilitator superfamily. LplT (TC 2.A.1.42) family.

The protein localises to the cell inner membrane. Its function is as follows. Catalyzes the facilitated diffusion of 2-acyl-glycero-3-phosphoethanolamine (2-acyl-GPE) into the cell. In Klebsiella pneumoniae subsp. pneumoniae (strain ATCC 700721 / MGH 78578), this protein is Lysophospholipid transporter LplT.